Reading from the N-terminus, the 782-residue chain is Phosphoribosylformylglycinamidine synthase subunit PurL (782 aa).

His50 is a catalytic residue. ATP contacts are provided by Tyr53 and Lys92. Glu94 lines the Mg(2+) pocket. Substrate is bound by residues 95-98 (SHNH) and Arg117. His96 acts as the Proton acceptor in catalysis. Asp118 lines the Mg(2+) pocket. Gln241 provides a ligand contact to substrate. Asp269 contacts Mg(2+). 313-315 (ESQ) is a substrate binding site. ATP-binding residues include Asp520 and Gly557. Asn558 provides a ligand contact to Mg(2+). Ser560 is a binding site for substrate.

It belongs to the FGAMS family. Monomer. Part of the FGAM synthase complex composed of 1 PurL, 1 PurQ and 2 PurS subunits.

The protein resides in the cytoplasm. It catalyses the reaction N(2)-formyl-N(1)-(5-phospho-beta-D-ribosyl)glycinamide + L-glutamine + ATP + H2O = 2-formamido-N(1)-(5-O-phospho-beta-D-ribosyl)acetamidine + L-glutamate + ADP + phosphate + H(+). The protein operates within purine metabolism; IMP biosynthesis via de novo pathway; 5-amino-1-(5-phospho-D-ribosyl)imidazole from N(2)-formyl-N(1)-(5-phospho-D-ribosyl)glycinamide: step 1/2. In terms of biological role, part of the phosphoribosylformylglycinamidine synthase complex involved in the purines biosynthetic pathway. Catalyzes the ATP-dependent conversion of formylglycinamide ribonucleotide (FGAR) and glutamine to yield formylglycinamidine ribonucleotide (FGAM) and glutamate. The FGAM synthase complex is composed of three subunits. PurQ produces an ammonia molecule by converting glutamine to glutamate. PurL transfers the ammonia molecule to FGAR to form FGAM in an ATP-dependent manner. PurS interacts with PurQ and PurL and is thought to assist in the transfer of the ammonia molecule from PurQ to PurL. This Cyanothece sp. (strain PCC 7425 / ATCC 29141) protein is Phosphoribosylformylglycinamidine synthase subunit PurL.